We begin with the raw amino-acid sequence, 278 residues long: MKLCFNEATTLENSNLAKDLEYCEKHGYDYIEIRTMDKLPEYLKDHALSELAEYFQTHHIKPLALNALVFFNNRDEKGHREIIEEFKGMMETCKMLGVKYVVAVPLVTEQKILKEDIKASSVEVLTELSDIAEPYGVKIAVEFVGHPECTVNTFSQAYDIVMTVNRDNVGLVFDSFHFHAMGSSLEDLKKADGKKIFIYHIDDTEDFPIGFLRDEDRVWPGQGAIDLDAHLSTLKDIGFSDVVSVELFRPEYYKLSAEETIRTAKETTVEVVSKYFKI.

A divalent metal cation contacts are provided by Glu142, Asp174, His200, and Glu246.

It belongs to the IolI family. Requires a divalent metal cation as cofactor.

The catalysed reaction is scyllo-inosose = scyllo-inosine. It participates in polyol metabolism; myo-inositol degradation into acetyl-CoA. Its function is as follows. Involved in the reversible interconverion of 2-keto-myo-inositol (2KMI, inosose or 2,4,6/3,5-pentahydroxycyclohexanone) to 1-keto-D-chiro-inositol (1KDCI or 2,3,5/4,6-pentahydroxycyclohexanone). The protein is Inosose isomerase (iolI) of Bacillus licheniformis (strain ATCC 14580 / DSM 13 / JCM 2505 / CCUG 7422 / NBRC 12200 / NCIMB 9375 / NCTC 10341 / NRRL NRS-1264 / Gibson 46).